Here is a 391-residue protein sequence, read N- to C-terminus: Elongation factor Tu (391 aa).

The tr-type G domain maps to 10-201; sequence KPHVNIGTIG…AVDDYIPTPE (192 aa). The interval 19–26 is G1; that stretch reads GHVDHGKT. 19–26 lines the GTP pocket; it reads GHVDHGKT. T26 contributes to the Mg(2+) binding site. The segment at 55 to 59 is G2; it reads GITIS. The segment at 76–79 is G3; the sequence is DCPG. GTP-binding positions include 76 to 80 and 131 to 134; these read DCPGH and NKVD. The interval 131-134 is G4; it reads NKVD. Positions 169 to 171 are G5; sequence SAL.

Belongs to the TRAFAC class translation factor GTPase superfamily. Classic translation factor GTPase family. EF-Tu/EF-1A subfamily. In terms of assembly, monomer.

The protein resides in the cytoplasm. It catalyses the reaction GTP + H2O = GDP + phosphate + H(+). In terms of biological role, GTP hydrolase that promotes the GTP-dependent binding of aminoacyl-tRNA to the A-site of ribosomes during protein biosynthesis. The chain is Elongation factor Tu from Paracoccus denitrificans (strain Pd 1222).